A 352-amino-acid polypeptide reads, in one-letter code: Photosystem II D2 protein (352 aa).

The chain crosses the membrane as a helical span at residues 40-60; that stretch reads CAYLALGGWLTGTTFVTSWYT. H117 serves as a coordination point for chlorophyll a. Residues 124–140 form a helical membrane-spanning segment; it reads GFMLRQFEIARLVGVRP. Pheophytin a-binding residues include Q129 and N142. Residues 152-165 form a helical membrane-spanning segment; it reads VFVSVFLIYPLGQS. Residue H197 coordinates chlorophyll a. The chain crosses the membrane as a helical span at residues 207-227; the sequence is GALLCAIHGATVENTLFQDGE. Residues H214 and F261 each contribute to the a plastoquinone site. H214 is a Fe cation binding site. H268 is a Fe cation binding site. A helical membrane pass occupies residues 278–294; it reads GLWMSSIGVVGLALNLR.

This sequence belongs to the reaction center PufL/M/PsbA/D family. In terms of assembly, PSII is composed of 1 copy each of membrane proteins PsbA, PsbB, PsbC, PsbD, PsbE, PsbF, PsbH, PsbI, PsbJ, PsbK, PsbL, PsbM, PsbT, PsbX, PsbY, PsbZ, Psb30/Ycf12, peripheral proteins PsbO, CyanoQ (PsbQ), PsbU, PsbV and a large number of cofactors. It forms dimeric complexes. The D1/D2 heterodimer binds P680, chlorophylls that are the primary electron donor of PSII, and subsequent electron acceptors. It shares a non-heme iron and each subunit binds pheophytin, quinone, additional chlorophylls, carotenoids and lipids. There is also a Cl(-1) ion associated with D1 and D2, which is required for oxygen evolution. The PSII complex binds additional chlorophylls, carotenoids and specific lipids. is required as a cofactor.

It is found in the cellular thylakoid membrane. It catalyses the reaction 2 a plastoquinone + 4 hnu + 2 H2O = 2 a plastoquinol + O2. Functionally, photosystem II (PSII) is a light-driven water:plastoquinone oxidoreductase that uses light energy to abstract electrons from H(2)O, generating O(2) and a proton gradient subsequently used for ATP formation. It consists of a core antenna complex that captures photons, and an electron transfer chain that converts photonic excitation into a charge separation. The D1/D2 (PsbA/PsbD) reaction center heterodimer binds P680, the primary electron donor of PSII as well as several subsequent electron acceptors. D2 is needed for assembly of a stable PSII complex. The sequence is that of Photosystem II D2 protein from Synechococcus sp. (strain JA-2-3B'a(2-13)) (Cyanobacteria bacterium Yellowstone B-Prime).